A 115-amino-acid polypeptide reads, in one-letter code: Mediator of RNA polymerase II transcription subunit 11 (115 aa).

Positions 56–107 (YERLDKSTTQLRKEIQLLDENVGTRLLPINVNKKALGQDTEKMEEQLDLLSA) form a coiled coil.

The protein belongs to the mediator complex subunit 11 family. As to quaternary structure, component of the Mediator complex, which is composed of at least 21 subunits that form three structurally distinct submodules. The Mediator head module contains MED6, MED8, MED11, SRB4/MED17, SRB5/MED18, ROX3/MED19, SRB2/MED20 and SRB6/MED22, the middle module contains MED1, MED4, NUT1/MED5, MED7, CSE2/MED9, NUT2/MED10, SRB7/MED21 and SOH1/MED31, and the tail module contains MED2, PGD1/MED3, RGR1/MED14, GAL11/MED15 and SIN4/MED16. The head and the middle modules interact directly with RNA polymerase II, whereas the elongated tail module interacts with gene-specific regulatory proteins. MED11 forms a heterodimer with SRB6/MED22. The MED11/22 heterodimer binds to and stabilizes the central head subunit SRB4/MED17. Interacts with TFIIH subunit RAD3.

It is found in the nucleus. Functionally, component of the Mediator complex, a coactivator involved in the regulated transcription of nearly all RNA polymerase II-dependent genes. Mediator functions as a bridge to convey information from gene-specific regulatory proteins to the basal RNA polymerase II transcription machinery. The Mediator complex, having a compact conformation in its free form, is recruited to promoters by direct interactions with regulatory proteins and serves for the assembly of a functional pre-initiation complex (PIC) with RNA polymerase II and the general transcription factors. The Mediator complex unfolds to an extended conformation and partially surrounds RNA polymerase II, specifically interacting with the unphosphorylated form of the C-terminal domain (CTD) of RNA polymerase II. The Mediator complex dissociates from the RNA polymerase II holoenzyme and stays at the promoter when transcriptional elongation begins. The essential MED11/22 heterodimer specifically functions in promoting stable PIC formation. The polypeptide is Mediator of RNA polymerase II transcription subunit 11 (MED11) (Saccharomyces cerevisiae (strain ATCC 204508 / S288c) (Baker's yeast)).